Here is a 1133-residue protein sequence, read N- to C-terminus: Lon protease homolog, mitochondrial (1133 aa).

The N-terminal 37 residues, 1-37 (MLRTRTTKTLSTVARTTRAIQYYRSIAKTAAVSQRRF), are a transit peptide targeting the mitochondrion. Positions 38-98 (ASTLTVRDVE…ATNSGKSILA (61 aa)) are cleaved as a propeptide — removed in mature form; by autocatalysis. Composition is skewed to basic and acidic residues over residues 98–117 (AKDDSTSQKKDEDVKIVPDE) and 125–143 (EPTRDDEIVNKDQEGEASK). Disordered stretches follow at residues 98 to 176 (AKDD…KDVP) and 282 to 358 (ELFP…LDDI). The segment covering 145-166 (SRSSASGGGQSSSSRSDSGDGS) has biased composition (low complexity). A Lon N-terminal domain is found at 182-480 (MLALPIARRP…KSLLVLKKEL (299 aa)). Basic and acidic residues-rich tracts occupy residues 282-301 (ELFPPNEEKEKSKEQAKDTD) and 325-340 (KLEDIVVERIPDSELQ). A compositionally biased stretch (acidic residues) spans 348–358 (TEEESEELDDI). ATP is bound at residue 632-639 (GPPGVGKT). Positions 839 to 892 (KKLSIEDSPTSSADSKPKESVSSEEKAENNAKSSSEKTKDNNSEKTSDDIEALK) are dispensable for catalytic activity. Residues 844–889 (EDSPTSSADSKPKESVSSEEKAENNAKSSSEKTKDNNSEKTSDDIE) are disordered. The span at 853 to 889 (SKPKESVSSEEKAENNAKSSSEKTKDNNSEKTSDDIE) shows a compositional bias: basic and acidic residues. The region spanning 923–1109 (TTPPGVVMGL…NDIFQKLFKD (187 aa)) is the Lon proteolytic domain. Active-site residues include Ser1015 and Lys1058.

This sequence belongs to the peptidase S16 family. In terms of assembly, homohexamer. Organized in a ring with a central cavity. The ATP-binding and proteolytic domains (AP-domain) form a hexameric chamber. Oligomerization is independent of its proteolytic activity and the autocatalytic maturation of its subunits.

Its subcellular location is the mitochondrion matrix. The catalysed reaction is Hydrolysis of proteins in presence of ATP.. Functionally, ATP-dependent serine protease that mediates the selective degradation of misfolded, unassembled or oxidatively damaged polypeptides as well as certain short-lived regulatory proteins in the mitochondrial matrix. May also have a chaperone function in the assembly of inner membrane protein complexes. Participates in the regulation of mitochondrial gene expression and in the maintenance of the integrity of the mitochondrial genome. Binds to mitochondrial DNA in a site-specific manner. Endogenous substrates include ABF2, ACO2, ILV1, ILV2, LSC1, LYS4, MGM101 and several oxidized proteins. The 2 nucleic acid-binding proteins ABF2 and MGM101 are protected from degradation by PIM1 when they are bound to DNA. The chain is Lon protease homolog, mitochondrial from Saccharomyces cerevisiae (strain ATCC 204508 / S288c) (Baker's yeast).